A 137-amino-acid polypeptide reads, in one-letter code: Beta-synuclein (137 aa).

2 tandem repeats follow at residues 20 to 30 and 31 to 41. Positions 20-67 are 4 X 11 AA tandem repeats of [EGS]-K-T-K-[EQ]-[GQ]-V-X(4); that stretch reads EKTKQGVTEAAEKTKEGVLYVGSKTKEGVVQGVASVAEKTKEQASHLG. The 3; approximate repeat unit spans residues 42 to 56; sequence SKTKEGVVQGVASVA. Repeat 4 spans residues 57 to 67; that stretch reads EKTKEQASHLG. Over residues 88 to 97 the composition is skewed to basic and acidic residues; sequence EFPTDLKPEE. Residues 88-137 are disordered; it reads EFPTDLKPEEVAQEAAEEPLIEPLMEPEGESYEDSPQEEYQEYEPEAKGP. The span at 98–131 shows a compositional bias: acidic residues; it reads VAQEAAEEPLIEPLMEPEGESYEDSPQEEYQEYE. At S118 the chain carries Phosphoserine; by BARK1, CK2 and GRK5.

The protein belongs to the synuclein family. In terms of processing, phosphorylated. Phosphorylation by G-protein coupled receptor kinases (GRK) is more efficient than phosphorylation by CK1, CK2 and CaM-kinase II. As to expression, expressed specifically in brain.

Its subcellular location is the cytoplasm. Functionally, may be involved in neuronal plasticity. The sequence is that of Beta-synuclein (Sncb) from Rattus norvegicus (Rat).